The primary structure comprises 113 residues: Large ribosomal subunit protein eL31 (113 aa).

This sequence belongs to the eukaryotic ribosomal protein eL31 family. Component of the large ribosomal subunit (LSU). Mature yeast ribosomes consist of a small (40S) and a large (60S) subunit. The 40S small subunit contains 1 molecule of ribosomal RNA (18S rRNA) and at least 33 different proteins. The large 60S subunit contains 3 rRNA molecules (25S, 5.8S and 5S rRNA) and at least 46 different proteins.

It localises to the cytoplasm. Its function is as follows. Component of the ribosome, a large ribonucleoprotein complex responsible for the synthesis of proteins in the cell. The small ribosomal subunit (SSU) binds messenger RNAs (mRNAs) and translates the encoded message by selecting cognate aminoacyl-transfer RNA (tRNA) molecules. The large subunit (LSU) contains the ribosomal catalytic site termed the peptidyl transferase center (PTC), which catalyzes the formation of peptide bonds, thereby polymerizing the amino acids delivered by tRNAs into a polypeptide chain. The nascent polypeptides leave the ribosome through a tunnel in the LSU and interact with protein factors that function in enzymatic processing, targeting, and the membrane insertion of nascent chains at the exit of the ribosomal tunnel. The protein is Large ribosomal subunit protein eL31 (rpl31) of Schizosaccharomyces pombe (strain 972 / ATCC 24843) (Fission yeast).